The primary structure comprises 911 residues: Probable 2-oxoadipate dehydrogenase complex component E1 homolog (911 aa).

It belongs to the alpha-ketoglutarate dehydrogenase family. Requires thiamine diphosphate as cofactor.

The protein localises to the mitochondrion. The enzyme catalyses N(6)-[(R)-lipoyl]-L-lysyl-[protein] + 2-oxoadipate + H(+) = N(6)-[(R)-S(8)-glutaryldihydrolipoyl]-L-lysyl-[protein] + CO2. In terms of biological role, 2-oxoadipate dehydrogenase (E1a) component of the 2-oxoadipate dehydrogenase complex (OADHC). Participates in the first step, rate limiting for the overall conversion of 2-oxoadipate (alpha-ketoadipate) to glutaryl-CoA and CO(2) catalyzed by the whole OADHC. Catalyzes the irreversible decarboxylation of 2-oxoadipate via the thiamine diphosphate (ThDP) cofactor and subsequent transfer of the decarboxylated acyl intermediate on an oxidized dihydrolipoyl group that is covalently amidated to the E2 enzyme (dihydrolipoyllysine-residue succinyltransferase or DLST). The protein is Probable 2-oxoadipate dehydrogenase complex component E1 homolog of Caenorhabditis elegans.